A 448-amino-acid polypeptide reads, in one-letter code: Protein W (448 aa).

Disordered regions lie at residues 26–104 (KTYG…DPDD) and 193–406 (FVPK…KKGA). Composition is skewed to polar residues over residues 28 to 37 (YGRSSIQQPS) and 77 to 96 (DLSS…SNTR). A compositionally biased stretch (acidic residues) spans 240-252 (SDDEDENQLEYED). Ser-257 is modified (phosphoserine; by host). Over residues 296–317 (FPEKEETPDVRRKDSLMQDSCK) the composition is skewed to basic and acidic residues. Ser-350 bears the Phosphoserine; by host mark.

The protein is Protein W (P/V/C) of Hendra virus (isolate Horse/Autralia/Hendra/1994).